The following is a 520-amino-acid chain: T-box transcription factor TBX22 (520 aa).

The tract at residues 1–91 (MALSSRARAF…NSSESLEEKD (91 aa)) is disordered. The span at 33–49 (PELREKKGGEEEEERRS) shows a compositional bias: basic and acidic residues. Low complexity predominate over residues 67–84 (STSASSGCGSDSGYGNSS). The T-box DNA-binding region spans 96–283 (LQGSELWKRF…RNPFAKGFRD (188 aa)).

As to expression, seems to be expressed at a low level.

The protein resides in the nucleus. Functionally, probable transcriptional regulator involved in developmental processes. This is major determinant crucial to palatogenesis. In Homo sapiens (Human), this protein is T-box transcription factor TBX22 (TBX22).